The following is a 218-amino-acid chain: Glutathione S-transferase Mu 1 (218 aa).

The GST N-terminal domain occupies 2–88 (PMTLGYWDIR…YIARKHNLCG (87 aa)). 7–8 (YW) contributes to the glutathione binding site. T34 bears the Phosphothreonine mark. Glutathione contacts are provided by residues 43–46 (RSQW), K50, 59–60 (NL), and 72–73 (QS). In terms of domain architecture, GST C-terminal spans 90–208 (TEEEKIRVDI…KSSRFLPKPL (119 aa)). Y116 lines the substrate pocket.

This sequence belongs to the GST superfamily. Mu family. In terms of assembly, homodimer.

Its subcellular location is the cytoplasm. The catalysed reaction is RX + glutathione = an S-substituted glutathione + a halide anion + H(+). It catalyses the reaction prostaglandin A2 + glutathione = prostaglandin A2-S-(R)-glutathione. The enzyme catalyses prostaglandin J2 + glutathione = prostaglandin J2-S-(R)-glutathione. It carries out the reaction prostaglandin J2 + glutathione = prostaglandin J2-S-(S)-glutathione. The catalysed reaction is prostaglandin A2 + glutathione = prostaglandin A2-S-(S)-glutathione. It catalyses the reaction 11(S)-hydroxy-14(S),15(S)-epoxy-(5Z,8Z,12E)-eicosatrienoate + glutathione = (11S,15S)-dihydroxy-14(R)-S-glutathionyl-(5Z,8Z,12E)-eicosatrienoate. Conjugation of reduced glutathione to a wide number of exogenous and endogenous hydrophobic electrophiles. Involved in the formation of glutathione conjugates of both prostaglandin A2 (PGA2) and prostaglandin J2 (PGJ2). Participates in the formation of novel hepoxilin regioisomers. The chain is Glutathione S-transferase Mu 1 (GSTM1) from Macaca fascicularis (Crab-eating macaque).